We begin with the raw amino-acid sequence, 395 residues long: Cyclomarin C epoxidase CymV (395 aa).

It belongs to the cytochrome P450 family.

Functionally, cytochrome P450; part of the gene cluster that mediates the biosynthesis of cyclic heptapeptides, known as cyclomarins and also of cyclic dipeptides, called cyclomarazines, which have both antimicrobial and cytotoxic effects. First, CymD catalyzes the reverse N-prenylation of monomeric L-tryptophan with dimethylallyl diphosphate (DMAPP) to form N-(1,1-dimethylallyl)-tryptophan (r-N-DMAT). The N-(1,1-dimethylallyl)-tryptophan produced by CymD is then combined with a range of standard and nonproteinogenic amino acid substrates to synthesize the peptides, a process that is probably catalyzed by the non-canonical nonribosomal peptide synthetase (NRPS), CymA. Other proteins in the cluster catalyze further modifications of the peptides including CymV which catalyzes the oxidation of olefinic cyclomarins and cyclomarazines to their respective epoxide derivatives. The protein is Cyclomarin C epoxidase CymV of Salinispora arenicola (strain CNS-205).